The primary structure comprises 56 residues: GSICLEPKVVGPCKARIRRFYFDSETGKCTPFIYGGCGGNGNNFETLHACRAICRA.

The 51-residue stretch at 4 to 54 folds into the BPTI/Kunitz inhibitor domain; it reads CLEPKVVGPCKARIRRFYFDSETGKCTPFIYGGCGGNGNNFETLHACRAIC. Disulfide bonds link Cys4–Cys54, Cys13–Cys37, and Cys29–Cys50.

The protein belongs to the venom Kunitz-type family. Sea anemone type 2 potassium channel toxin subfamily.

It localises to the secreted. It is found in the nematocyst. This recombinant serine protease inhibitor inhibits both trypsin (Ki=21 nM) and chymotrypsin (Ki=500 nM). It possesses anti-inflammatory activity in vitro. It inhibits macrophage LPS-induced nitric oxide synthesis, and blocks histamine influence on intracellular calcium concentration in murine bone marrow-derived macrophages, which can indicate inhibition of H1-histamine receptor (HRH1). In vitro, it shows cytoprotective activity in the oxidative stress agent 6-hydroxydopamine (6-OHDA)-induced neurotoxicity model. In this model, it decreases reactive oxygen species (ROS) levels, and increases cell viability in a correlated manner. It is possible that the observed effect is due to the ability of this peptides to act as free-radical scavenger. In vivo, it shows analgesic activity, since it increases hot plate and tail flick withdrawal latencies, when using a mice thermal pain stimulation model. The polypeptide is PI-stichotoxin-Hcr2o (Radianthus crispa (Leathery sea anemone)).